The primary structure comprises 148 residues: Small ribosomal subunit protein eS19 (148 aa).

It belongs to the eukaryotic ribosomal protein eS19 family. Part of the 30S ribosomal subunit.

Functionally, may be involved in maturation of the 30S ribosomal subunit. The polypeptide is Small ribosomal subunit protein eS19 (Methanocaldococcus jannaschii (strain ATCC 43067 / DSM 2661 / JAL-1 / JCM 10045 / NBRC 100440) (Methanococcus jannaschii)).